A 449-amino-acid polypeptide reads, in one-letter code: MKLSAVILAAGKGLRMRSDLPKVAHRVAGKPIILHVIQAVKEAGIEDIVVVVGHGREVVQEICSGEKIRFVLQEQQLGTGHALMQAEAVVAPEDTILVLAGDIPLIQATSLQQLMESHRQKQATATVLSVNMQNPSGYGRILRDQQGAFLRIIEEKDANDEEKKIKEINSGIYCFCARKVFSALHSTSTRNAQGEYYLTEALELLKNQQESIGIFLSDGEEDIYGINDRVQLAQAENILRQRKNRELMLSGVSLMDPASTFIDSDVLIGHDTIILPFTIIEGNSRLGERCEIGPGTRISDSIIGSEVKIESSRLIQASVADRCNIGPFAYLRPETTLLEGVKVGDFVEIKKSTIGTGSKIPHLSYVGDATIGQGVNVGAGTITCNYDGKNKYQTVLEDRVFIGSNTNLVAPVRIGENSITGAGSTISRDVPPHTLAVERAGQKHLPRKG.

The pyrophosphorylase stretch occupies residues 1–229 (MKLSAVILAA…EEDIYGINDR (229 aa)). UDP-N-acetyl-alpha-D-glucosamine contacts are provided by residues 8–11 (LAAG), K22, Q73, and 78–79 (GT). A Mg(2+)-binding site is contributed by D102. UDP-N-acetyl-alpha-D-glucosamine contacts are provided by G139, E154, N169, and N227. Residue N227 coordinates Mg(2+). The segment at 230–250 (VQLAQAENILRQRKNRELMLS) is linker. Residues 251–449 (GVSLMDPAST…AGQKHLPRKG (199 aa)) are N-acetyltransferase. UDP-N-acetyl-alpha-D-glucosamine is bound by residues R332 and K350. The Proton acceptor role is filled by H362. Positions 365 and 376 each coordinate UDP-N-acetyl-alpha-D-glucosamine. Residues A379, 385-386 (NY), S404, A422, and R439 each bind acetyl-CoA.

It in the N-terminal section; belongs to the N-acetylglucosamine-1-phosphate uridyltransferase family. This sequence in the C-terminal section; belongs to the transferase hexapeptide repeat family. Homotrimer. Requires Mg(2+) as cofactor.

It localises to the cytoplasm. The catalysed reaction is alpha-D-glucosamine 1-phosphate + acetyl-CoA = N-acetyl-alpha-D-glucosamine 1-phosphate + CoA + H(+). It catalyses the reaction N-acetyl-alpha-D-glucosamine 1-phosphate + UTP + H(+) = UDP-N-acetyl-alpha-D-glucosamine + diphosphate. Its pathway is nucleotide-sugar biosynthesis; UDP-N-acetyl-alpha-D-glucosamine biosynthesis; N-acetyl-alpha-D-glucosamine 1-phosphate from alpha-D-glucosamine 6-phosphate (route II): step 2/2. It participates in nucleotide-sugar biosynthesis; UDP-N-acetyl-alpha-D-glucosamine biosynthesis; UDP-N-acetyl-alpha-D-glucosamine from N-acetyl-alpha-D-glucosamine 1-phosphate: step 1/1. The protein operates within bacterial outer membrane biogenesis; LPS lipid A biosynthesis. Its function is as follows. Catalyzes the last two sequential reactions in the de novo biosynthetic pathway for UDP-N-acetylglucosamine (UDP-GlcNAc). The C-terminal domain catalyzes the transfer of acetyl group from acetyl coenzyme A to glucosamine-1-phosphate (GlcN-1-P) to produce N-acetylglucosamine-1-phosphate (GlcNAc-1-P), which is converted into UDP-GlcNAc by the transfer of uridine 5-monophosphate (from uridine 5-triphosphate), a reaction catalyzed by the N-terminal domain. In Syntrophomonas wolfei subsp. wolfei (strain DSM 2245B / Goettingen), this protein is Bifunctional protein GlmU.